The following is a 256-amino-acid chain: Triosephosphate isomerase (256 aa).

10–12 (NWK) is a binding site for substrate. Catalysis depends on histidine 96, which acts as the Electrophile. Glutamate 168 acts as the Proton acceptor in catalysis. Glycine 174 and serine 213 together coordinate substrate.

This sequence belongs to the triosephosphate isomerase family. As to quaternary structure, homodimer.

The protein localises to the cytoplasm. It carries out the reaction D-glyceraldehyde 3-phosphate = dihydroxyacetone phosphate. The protein operates within carbohydrate biosynthesis; gluconeogenesis. It functions in the pathway carbohydrate degradation; glycolysis; D-glyceraldehyde 3-phosphate from glycerone phosphate: step 1/1. Its function is as follows. Involved in the gluconeogenesis. Catalyzes stereospecifically the conversion of dihydroxyacetone phosphate (DHAP) to D-glyceraldehyde-3-phosphate (G3P). This is Triosephosphate isomerase from Wigglesworthia glossinidia brevipalpis.